We begin with the raw amino-acid sequence, 271 residues long: Pyrroline-5-carboxylate reductase (271 aa).

Belongs to the pyrroline-5-carboxylate reductase family.

It is found in the cytoplasm. It carries out the reaction L-proline + NADP(+) = (S)-1-pyrroline-5-carboxylate + NADPH + 2 H(+). The catalysed reaction is L-proline + NAD(+) = (S)-1-pyrroline-5-carboxylate + NADH + 2 H(+). The protein operates within amino-acid biosynthesis; L-proline biosynthesis; L-proline from L-glutamate 5-semialdehyde: step 1/1. In terms of biological role, catalyzes the reduction of 1-pyrroline-5-carboxylate (PCA) to L-proline. The sequence is that of Pyrroline-5-carboxylate reductase from Staphylococcus haemolyticus (strain JCSC1435).